We begin with the raw amino-acid sequence, 383 residues long: 2-methylcitrate synthase 2 (383 aa).

2 residues coordinate substrate: Arg73 and His195. His230 is a catalytic residue. 263-267 (VVMGF) lines the CoA pocket. The active site involves His269. Position 278 (Arg278) interacts with substrate. Asp320 is a catalytic residue. Residues Arg345 and Arg364 each coordinate substrate.

It belongs to the citrate synthase family. In terms of assembly, homodimer.

It carries out the reaction propanoyl-CoA + oxaloacetate + H2O = (2S,3S)-2-methylcitrate + CoA + H(+). The catalysed reaction is oxaloacetate + acetyl-CoA + H2O = citrate + CoA + H(+). The protein operates within organic acid metabolism; propanoate degradation. It functions in the pathway carbohydrate metabolism; tricarboxylic acid cycle; isocitrate from oxaloacetate: step 1/2. Involved in the catabolism of short chain fatty acids (SCFA) via the tricarboxylic acid (TCA)(acetyl degradation route) and via the 2-methylcitrate cycle I (propionate degradation route). Catalyzes the Claisen condensation of propionyl-CoA and oxaloacetate (OAA) to yield 2-methylcitrate (2-MC) and CoA. Also catalyzes the condensation of oxaloacetate with acetyl-CoA but with a lower specificity. The polypeptide is 2-methylcitrate synthase 2 (prpC2) (Corynebacterium glutamicum (strain ATCC 13032 / DSM 20300 / JCM 1318 / BCRC 11384 / CCUG 27702 / LMG 3730 / NBRC 12168 / NCIMB 10025 / NRRL B-2784 / 534)).